We begin with the raw amino-acid sequence, 109 residues long: Mannose-specific lectin (109 aa).

The 85-residue stretch at 25–109 folds into the Bulb-type lectin domain; that stretch reads MQEDCNLVLY…ARWATGTNIH (85 aa). Alpha-D-mannopyranose is bound by residues Gln-26, Asp-28, Asn-30, Tyr-34, Asp-37, Lys-38, Trp-41, Ala-42, Asn-44, Gln-57, Asp-59, Asn-61, Tyr-65, Ile-72, Trp-73, Asn-76, Asn-83, Gln-89, Asp-91, Asn-93, Tyr-97, and Trp-102. A disulfide bond links Cys-29 and Cys-52.

Homotetramer; antiparallel. As to expression, detected in bulbs (at protein level).

The protein resides in the secreted. With respect to regulation, strongly inhibited by alpha-1,6-linked mannotriose. Inhibited by various oligosaccharides of P.pastoris mannan including, Man(alpha-l,6)Man-alpha-O-Me, Man(alpha-l,2)Man, Man(alpha-l,3)Man-alpha-O-Me, Man(alpha-l,2)Man, alpha-1,2-linked mannotriose, and Man(alpha-1,6)Glc, in order of decreasing potency. Weakly inhibited by elsinotetraose. Not inhibited by maltose or nigerose. Functionally, D-mannose-binding lectin which binds alpha-D-linked mannose. Displays a high affinity for alpha-(1-6)-mannose oligomers. Able to interact with both terminal and internal alpha-D-mannosyl residues. Displays antiviral activity and therefore may contribute to defense against infections. This is Mannose-specific lectin from Narcissus pseudonarcissus (Daffodil).